Consider the following 694-residue polypeptide: Polyribonucleotide nucleotidyltransferase (694 aa).

Residues aspartate 485 and aspartate 491 each contribute to the Mg(2+) site. In terms of domain architecture, KH spans 552-611; sequence PRIETMQIKPNKIATVIGPGGKQIRQIIEEAGVQIDINDSGLVSISASSPQAIEKAKSMI. The S1 motif domain maps to 621-689; the sequence is GKIYEGRVTS…EKGQYKLSHK (69 aa).

The protein belongs to the polyribonucleotide nucleotidyltransferase family. Mg(2+) serves as cofactor.

It localises to the cytoplasm. It catalyses the reaction RNA(n+1) + phosphate = RNA(n) + a ribonucleoside 5'-diphosphate. Involved in mRNA degradation. Catalyzes the phosphorolysis of single-stranded polyribonucleotides processively in the 3'- to 5'-direction. This is Polyribonucleotide nucleotidyltransferase from Chlamydia caviae (strain ATCC VR-813 / DSM 19441 / 03DC25 / GPIC) (Chlamydophila caviae).